Here is a 409-residue protein sequence, read N- to C-terminus: MGKLHSKHACKRRENPEGDSFVVNGFIAKRAAEEGERYGNNLKDYKNEELKDSQPTLLHCPLQVVLPPEKAEGCESFLQYLSPDDEERDAQKVTKRISLQDLECNVSLAEDNRQEWVFTLYDFDNSGKVTKEDMSSLMHTIYDVVDASVKHSCNSKRRSLRVKLSVTPEPAARRRDATHTERETSHLSQVEPVRSEEHRSADRRQSTHIRGQTEAHEGNHYCVDENTERRNHYLDLAGIENYTSRFDSSSPDADQDPPSRSSHSQSRPHSQEPETHVYQRRSQLMEPCVAPDPRLRTGPQLIRSRSPKGSSRYPGVIPNVTKTSKCHGHHQPISAGQDVYHLTQQSHTHAHTPSGLQHSHSRRIRSRAREQQALTPVKNTNATALVQRHEHHHHHEHHHHHHYHHYHQT.

Gly-2 carries the N-myristoyl glycine lipid modification. An EF-hand domain is found at 109-144 (AEDNRQEWVFTLYDFDNSGKVTKEDMSSLMHTIYDV). Ca(2+) is bound by residues Asp-122, Asp-124, Ser-126, Lys-128, and Asp-133. 4 disordered regions span residues 160–224 (LRVK…YCVD), 243–315 (TSRF…RYPG), 346–366 (SHTHAHTPSGLQHSHSRRIRS), and 388–409 (RHEHHHHHEHHHHHHYHHYHQT). Composition is skewed to basic and acidic residues over residues 171 to 185 (AARRRDATHTERETS) and 193 to 224 (VRSEEHRSADRRQSTHIRGQTEAHEGNHYCVD). Residues 247 to 268 (DSSSPDADQDPPSRSSHSQSRP) show a composition bias toward low complexity. Residues 389–409 (HEHHHHHEHHHHHHYHHYHQT) are compositionally biased toward basic residues.

Belongs to the NKD family. Expressed ubiquitously until 1 dpf, when expression becomes confined to the anterior CNS, with slight expression in the developing tail.

It localises to the cell membrane. It is found in the cytoplasm. Its function is as follows. Cell autonomous antagonist of both the canonical and non-canonical Wnt signaling pathways. This is Protein naked cuticle homolog 2 (nkd2) from Danio rerio (Zebrafish).